A 458-amino-acid polypeptide reads, in one-letter code: PH domain-containing protein DDB_G0274775 (458 aa).

Residues proline 15 to aspartate 112 form the PH domain. The segment at leucine 111–arginine 154 is disordered. Over residues isoleucine 124 to glycine 142 the composition is skewed to polar residues. Over residues serine 143–arginine 154 the composition is skewed to low complexity.

This Dictyostelium discoideum (Social amoeba) protein is PH domain-containing protein DDB_G0274775.